The chain runs to 926 residues: Rap guanine nucleotide exchange factor 3 (926 aa).

Residue S79 is modified to Phosphoserine. The 77-residue stretch at 110–186 (ATYPTLIRDR…RDAQFYRFPG (77 aa)) folds into the DEP domain. The interaction with PDE3B stretch occupies residues 218 to 242 (TVALRKSPGQRTDEELDLIFEELVH). Residues 311–314 (GQLA) and 321–322 (RA) contribute to the 3',5'-cyclic AMP site. A disordered region spans residues 369–388 (TSQGAGPSRPPTPGRNRYTV). Residues 384–521 (NRYTVMSGTP…EQYPERRRHH (138 aa)) form the N-terminal Ras-GEF domain. The tract at residues 398–422 (ELLLEAMRPDSSAHDPTETFLSDFL) is interaction with PDE3B. Residues S531 and S867 each carry the phosphoserine modification. A Ras-GEF domain is found at 665–892 (SAKDLAGQLT…SRISTCSEQS (228 aa)).

As to quaternary structure, interacts with PDE3B and PIK3R6; form a signaling complex that regulates phosphatidylinositol 3-kinase gamma in angiogenesis. Expressed at low levels in adult brain. Strongly expressed in parts of the neonatal brain, including the septum and the thalamus.

It localises to the cytoplasm. The protein localises to the membrane. In terms of biological role, guanine nucleotide exchange factor (GEF) for RAP1A and RAP2A small GTPases that is activated by binding cAMP. Through simultaneous binding of PDE3B to RAPGEF3 and PIK3R6 is assembled in a signaling complex in which it activates the PI3K gamma complex and which is involved in angiogenesis. Plays a role in the modulation of the cAMP-induced dynamic control of endothelial barrier function through a pathway that is independent on Rho-mediated signaling. Required for the actin rearrangement at cell-cell junctions, such as stress fibers and junctional actin. This chain is Rap guanine nucleotide exchange factor 3 (Rapgef3), found in Rattus norvegicus (Rat).